Reading from the N-terminus, the 119-residue chain is Phosphoribosyl-AMP cyclohydrolase (119 aa).

Position 77 (Asp77) interacts with Mg(2+). Position 78 (Cys78) interacts with Zn(2+). Asp79 and Asp81 together coordinate Mg(2+). Residues Cys94 and Cys101 each coordinate Zn(2+).

Belongs to the PRA-CH family. In terms of assembly, homodimer. Requires Mg(2+) as cofactor. The cofactor is Zn(2+).

The protein localises to the cytoplasm. It carries out the reaction 1-(5-phospho-beta-D-ribosyl)-5'-AMP + H2O = 1-(5-phospho-beta-D-ribosyl)-5-[(5-phospho-beta-D-ribosylamino)methylideneamino]imidazole-4-carboxamide. It participates in amino-acid biosynthesis; L-histidine biosynthesis; L-histidine from 5-phospho-alpha-D-ribose 1-diphosphate: step 3/9. Catalyzes the hydrolysis of the adenine ring of phosphoribosyl-AMP. This is Phosphoribosyl-AMP cyclohydrolase from Dinoroseobacter shibae (strain DSM 16493 / NCIMB 14021 / DFL 12).